We begin with the raw amino-acid sequence, 478 residues long: Probable cytosol aminopeptidase (478 aa).

Residues K244 and D249 each coordinate Mn(2+). The active site involves K256. Mn(2+) is bound by residues D267, D326, and E328. The active site involves R330.

This sequence belongs to the peptidase M17 family. Mn(2+) is required as a cofactor.

The protein localises to the cytoplasm. It catalyses the reaction Release of an N-terminal amino acid, Xaa-|-Yaa-, in which Xaa is preferably Leu, but may be other amino acids including Pro although not Arg or Lys, and Yaa may be Pro. Amino acid amides and methyl esters are also readily hydrolyzed, but rates on arylamides are exceedingly low.. It carries out the reaction Release of an N-terminal amino acid, preferentially leucine, but not glutamic or aspartic acids.. Presumably involved in the processing and regular turnover of intracellular proteins. Catalyzes the removal of unsubstituted N-terminal amino acids from various peptides. This Fusobacterium nucleatum subsp. nucleatum (strain ATCC 25586 / DSM 15643 / BCRC 10681 / CIP 101130 / JCM 8532 / KCTC 2640 / LMG 13131 / VPI 4355) protein is Probable cytosol aminopeptidase.